The chain runs to 436 residues: GTPase Der (436 aa).

2 consecutive EngA-type G domains span residues 4 to 167 (PVIA…PKIE) and 176 to 351 (IRFS…ESHS). Residues 10–17 (GRPNVGKS), 57–61 (DTGGI), 119–122 (NKVD), 182–189 (GRPNVGKS), 229–233 (DTAGM), and 294–297 (NKWD) each bind GTP. The KH-like domain maps to 352–436 (IRVQTNVLND…PIHIIARARD (85 aa)).

Belongs to the TRAFAC class TrmE-Era-EngA-EngB-Septin-like GTPase superfamily. EngA (Der) GTPase family. In terms of assembly, associates with the 50S ribosomal subunit.

Functionally, GTPase that plays an essential role in the late steps of ribosome biogenesis. The polypeptide is GTPase Der (Bacillus cereus (strain G9842)).